The sequence spans 1036 residues: Protein smoothened (1036 aa).

The first 31 residues, 1-31, serve as a signal peptide directing secretion; that stretch reads MQYLNFPRMPNIMMFLEVAILCLWVVADASA. At 32 to 258 the chain is on the extracellular side; that stretch reads SSAKFGSTTP…DDEHRQIHKL (227 aa). N-linked (GlcNAc...) asparagine glycans are attached at residues Asn55 and Asn95. Residues 85-206 form the FZ domain; it reads VRRARCYPTS…TLFPTKCTNG (122 aa). 4 disulfides stabilise this stretch: Cys90–Cys155, Cys100–Cys148, Cys139–Cys179, and Cys172–Cys194. N-linked (GlcNAc...) asparagine glycosylation is found at Asn184, Asn195, and Asn213. Cystine bridges form between Cys218/Cys238 and Cys242/Cys320. A helical transmembrane segment spans residues 259 to 279; the sequence is IGWAGSICLLSNLFVVSTFFI. Topologically, residues 280-287 are cytoplasmic; sequence DWKNANKY. Residues 288–308 traverse the membrane as a helical segment; the sequence is PAVIVFYINLCFLIACVGWLL. Residues 309-339 lie on the Extracellular side of the membrane; it reads QFTSGSREDIVCRKDGTLRHSEPTAGENLSC. Asn336 carries an N-linked (GlcNAc...) asparagine glycan. A disulfide bridge connects residues Cys339 and Cys413. The chain crosses the membrane as a helical span at residues 340 to 360; it reads IVIFVLVYYFLTAGMVWFVFL. The Cytoplasmic segment spans residues 361 to 381; that stretch reads TYAWHWRAMGHVQDRIDKKGS. The chain crosses the membrane as a helical span at residues 382–402; the sequence is YFHLVAWSLPLVLTITTMAFS. The Extracellular portion of the chain corresponds to 403-421; that stretch reads EVDGNSIVGICFVGYINHS. Asn419 carries N-linked (GlcNAc...) asparagine glycosylation. The helical transmembrane segment at 422 to 442 threads the bilayer; that stretch reads MRAGLLLGPLCGVILIGGYFI. Over 443–469 the chain is Cytoplasmic; it reads TRGMVMLFGLKHFANDIKSTSASNKIH. Residues 470–490 traverse the membrane as a helical segment; it reads LIIMRMGVCALLTLVFILVAI. Topologically, residues 491–532 are extracellular; sequence ACHVTEFRHADEWAQSFRQFIICKISSVFEEKSSCRIENRPS. Cysteines 513 and 525 form a disulfide. A helical transmembrane segment spans residues 533–553; sequence VGVLQLHLLCLFSSGIVMSTW. Residues 554-1036 lie on the Cytoplasmic side of the membrane; sequence CWTPSSIETW…KLKMLLLPSK (483 aa). Phosphoserine occurs at positions 658, 659, 667, 670, 673, 687, 690, and 693. Disordered stretches follow at residues 678–745 and 870–902; these read HVSV…TSVE and IKKS…KNPA. Over residues 880-899 the composition is skewed to basic residues; sequence RHSRNSARSQSKKSQKRHLK.

It belongs to the G-protein coupled receptor Fz/Smo family. As to quaternary structure, interacts with cos. Post-translationally, phosphorylation by CkIalpha and PKA regulates smo accumulation at the cell surface and its signaling activity in response to hh. In terms of tissue distribution, expressed in olfactory sensory neurons (at protein level).

The protein resides in the cell membrane. It localises to the cell projection. The protein localises to the cilium. Functionally, segment polarity protein required for correct patterning of every segment. G protein-coupled receptor which associates with the patched protein (ptc) to transduce the hedgehog (hh) signal through the activation of an inhibitory G-protein. In the absence of hh, ptc represses the constitutive signaling activity of smo through fused (fu). Essential component of a hh-signaling pathway which regulates the Duox-dependent gut immune response to bacterial uracil; required to activate Cad99C-dependent endosome formation, norpA-dependent Ca2+ mobilization and p38 MAPK, which are essential steps in the Duox-dependent production of reactive oxygen species (ROS) in response to intestinal bacterial infection. The sequence is that of Protein smoothened (smo) from Drosophila melanogaster (Fruit fly).